The following is a 502-amino-acid chain: ATP synthase subunit alpha (502 aa).

169 to 176 contacts ATP; the sequence is GDRQTGKT.

Belongs to the ATPase alpha/beta chains family. As to quaternary structure, F-type ATPases have 2 components, CF(1) - the catalytic core - and CF(0) - the membrane proton channel. CF(1) has five subunits: alpha(3), beta(3), gamma(1), delta(1), epsilon(1). CF(0) has three main subunits: a(1), b(2) and c(9-12). The alpha and beta chains form an alternating ring which encloses part of the gamma chain. CF(1) is attached to CF(0) by a central stalk formed by the gamma and epsilon chains, while a peripheral stalk is formed by the delta and b chains.

It is found in the cell membrane. The enzyme catalyses ATP + H2O + 4 H(+)(in) = ADP + phosphate + 5 H(+)(out). In terms of biological role, produces ATP from ADP in the presence of a proton gradient across the membrane. The alpha chain is a regulatory subunit. In Bacillus velezensis (strain DSM 23117 / BGSC 10A6 / LMG 26770 / FZB42) (Bacillus amyloliquefaciens subsp. plantarum), this protein is ATP synthase subunit alpha.